The following is a 103-amino-acid chain: Small ribosomal subunit protein uS10 (103 aa).

It belongs to the universal ribosomal protein uS10 family. In terms of assembly, part of the 30S ribosomal subunit.

In terms of biological role, involved in the binding of tRNA to the ribosomes. The chain is Small ribosomal subunit protein uS10 from Buchnera aphidicola subsp. Acyrthosiphon pisum (strain 5A).